Here is a 204-residue protein sequence, read N- to C-terminus: Somatotropin (204 aa).

Residues M1–S17 form the signal peptide. Q18 bears the Pyrrolidone carboxylic acid mark. H36 is a binding site for Zn(2+). Residues C69 and C177 are joined by a disulfide bond. Residue E186 participates in Zn(2+) binding. A disulfide bond links C194 and C202.

This sequence belongs to the somatotropin/prolactin family.

Its subcellular location is the secreted. In terms of biological role, growth hormone plays an important role in growth control and involved in the regulation of several anabolic processes. This Perca flavescens (American yellow perch) protein is Somatotropin (gh).